We begin with the raw amino-acid sequence, 172 residues long: S-ribosylhomocysteine lyase (172 aa).

Residues H54, H58, and C128 each coordinate Fe cation.

The protein belongs to the LuxS family. In terms of assembly, homodimer. Requires Fe cation as cofactor.

The catalysed reaction is S-(5-deoxy-D-ribos-5-yl)-L-homocysteine = (S)-4,5-dihydroxypentane-2,3-dione + L-homocysteine. Involved in the synthesis of autoinducer 2 (AI-2) which is secreted by bacteria and is used to communicate both the cell density and the metabolic potential of the environment. The regulation of gene expression in response to changes in cell density is called quorum sensing. Catalyzes the transformation of S-ribosylhomocysteine (RHC) to homocysteine (HC) and 4,5-dihydroxy-2,3-pentadione (DPD). This chain is S-ribosylhomocysteine lyase, found in Vibrio parahaemolyticus serotype O3:K6 (strain RIMD 2210633).